The sequence spans 448 residues: Ribosomal protein uS12 methylthiotransferase RimO (448 aa).

Residues 7-123 (EKVSLVSLGC…IAEIIAEKKQ (117 aa)) enclose the MTTase N-terminal domain. C16, C52, C86, C161, C165, and C168 together coordinate [4Fe-4S] cluster. One can recognise a Radical SAM core domain in the interval 147–377 (SSPHYTAYLK…MRTQARVSFK (231 aa)). A TRAM domain is found at 380–448 (RTLVDSEEDV…DYDLIGEIVD (69 aa)).

Belongs to the methylthiotransferase family. RimO subfamily. The cofactor is [4Fe-4S] cluster.

The protein resides in the cytoplasm. It carries out the reaction L-aspartate(89)-[ribosomal protein uS12]-hydrogen + (sulfur carrier)-SH + AH2 + 2 S-adenosyl-L-methionine = 3-methylsulfanyl-L-aspartate(89)-[ribosomal protein uS12]-hydrogen + (sulfur carrier)-H + 5'-deoxyadenosine + L-methionine + A + S-adenosyl-L-homocysteine + 2 H(+). Its function is as follows. Catalyzes the methylthiolation of an aspartic acid residue of ribosomal protein uS12. The protein is Ribosomal protein uS12 methylthiotransferase RimO of Citrifermentans bemidjiense (strain ATCC BAA-1014 / DSM 16622 / JCM 12645 / Bem) (Geobacter bemidjiensis).